We begin with the raw amino-acid sequence, 156 residues long: Enhancer of split M1 protein (156 aa).

A signal peptide spans 1-19; that stretch reads MMSQTLTLCCLGLVACVYG. 2 Kazal-like domains span residues 23–81 and 96–156; these read STND…AWCS and KLEV…EEKC. 5 disulfide bridges follow: C29-C62, C33-C55, C102-C135, C106-C128, and C114-C156.

The sequence is that of Enhancer of split M1 protein from Drosophila simulans (Fruit fly).